A 339-amino-acid polypeptide reads, in one-letter code: Dehydrogenase/reductase SDR family member 7 (339 aa).

The first 28 residues, 1–28, serve as a signal peptide directing secretion; sequence MNWELLLWLLVLCALLLLLVQLLRFLRA. NAD(+) is bound by residues serine 60 and isoleucine 62. Serine 190 contacts substrate. NAD(+)-binding residues include tyrosine 203, lysine 207, and serine 239. The active-site Proton acceptor is the tyrosine 203.

It belongs to the short-chain dehydrogenases/reductases (SDR) family. As to expression, found predominantly in the adrenal glands, liver, thyroid, prostate, small intestine, colon, stomach, kidney and brain. Lower levels observed in skeletal muscle, the lung and the spleen.

It is found in the endoplasmic reticulum membrane. It carries out the reaction all-trans-retinol + NADP(+) = all-trans-retinal + NADPH + H(+). The enzyme catalyses 5alpha-androstane-3alpha,17beta-diol + NADP(+) = 17beta-hydroxy-5alpha-androstan-3-one + NADPH + H(+). Functionally, NADPH-dependent oxidoreductase which catalyzes the reduction of a variety of compounds bearing carbonyl groups including steroids, retinoids and xenobiotics. Catalyzes the reduction/inactivation of 5alpha-dihydrotestosterone to 3alpha-androstanediol, with a possible role in the modulation of androgen receptor function. Involved in the reduction of all-trans-retinal to all-trans-retinol. Converts cortisone to 20beta-dihydrocortisone in vitro, although the physiological relevance of this activity is questionable. Reduces exogenous compounds such as quinones (1,2-naphtoquinone, 9,10-phenantrenequinone and benzoquinone) and other xenobiotics (alpha-diketones) in vitro, suggesting a role in the biotransformation of xenobiotics with carbonyl group. A dehydrogenase activity has not been detected so far. May play a role as tumor suppressor. This Homo sapiens (Human) protein is Dehydrogenase/reductase SDR family member 7.